The chain runs to 2512 residues: Isonitrile lipopeptide synthase (2512 aa).

Carrier domains are found at residues 935 to 1003 (AAGL…PTPD) and 1984 to 2059 (APAG…GRDA). 2 positions are modified to O-(pantetheine 4'-phosphoryl)serine: S963 and S2019. The Thioester reductase (TE) domain occupies 2112 to 2372 (LTGATGFLGR…LPVTFVAEAI (261 aa)).

Belongs to the ATP-dependent AMP-binding enzyme family. The cofactor is pantetheine 4'-phosphate.

It carries out the reaction 2 a (3R)-3-isocyanyl-fatty acyl-[ACP] + L-lysine + ATP + 2 NADPH = an isonitrile lipopeptide + 2 holo-[ACP] + AMP + diphosphate + 2 NADP(+). Its function is as follows. Nonribosomal peptide synthetase (NRPS) involved in the biosynthesis of a unique class of isonitrile lipopeptides (INLPs) that seem to function as virulence factors in M.tuberculosis and to play a role in metal acquisition. Catalyzes the final step in the pathway, i.e. the condensation of a (3R)-3-isocyanyl-fatty acyl-[ACP] to both amino groups of a lysine, producing isonitrile lipopeptides. In Mycobacterium tuberculosis (strain ATCC 25618 / H37Rv), this protein is Isonitrile lipopeptide synthase.